We begin with the raw amino-acid sequence, 605 residues long: Adaptin medium chain homolog APM2 (605 aa).

Positions 150 to 196 (EEWSPGEESSSSSGSDSDSEYSNTNKRKDKKKKRKKKKGTKGKSVGK) are disordered. Residues 155-171 (GEESSSSSGSDSDSEYS) show a composition bias toward low complexity. Over residues 174-196 (NKRKDKKKKRKKKKGTKGKSVGK) the composition is skewed to basic residues. Residues 269–604 (KNEFFLDVIE…TVSDEEYAYI (336 aa)) enclose the MHD domain.

It belongs to the adaptor complexes medium subunit family. In terms of assembly, component of the AP-1R complex composed of at least APM2, APL4 and APS1. Interacts with MIL1. Interacts with APL2.

It localises to the golgi apparatus membrane. The protein localises to the early endosome membrane. It is found in the cytoplasmic vesicle. Its subcellular location is the clathrin-coated vesicle membrane. Functionally, component of the AP-1-related (AP-1R) complex, an adapter protein complex that mediates of cargo protein sorting in clathrin-coated vesicles. AP-1R has a specific role in SNARE SNC1 sorting. In contrast to the APM1-containing AP-1 complex, AP-1R is incapable of sorting CHS3. The chain is Adaptin medium chain homolog APM2 (APM2) from Saccharomyces cerevisiae (strain ATCC 204508 / S288c) (Baker's yeast).